We begin with the raw amino-acid sequence, 306 residues long: MRQGLMAAVLFATFALTGCGTDSAGKSADQQLQVTATTSQIADAAENIGGKHVKVTSLMGPGVDPHLYKASQGDTKKLMSADVVLYSGLHLEGKMEDVLQKIGEQKQSAAVAEAIPKNKLIPAGEGKTFDPHVWFSIPLWIYAVDEIEAQFSKAMPQHADAFRKNAKEYKEDLQYLDKWSRKEIAHIPEKSRVLVTAHDAFAYFGNEYGFKVKGLQGLSTDSDYGLRDVQELVDLLTEKQIKAVFVESSVSEKSINAVVEGAKEKGHTVTIGGQLYSDAMGEKGTKEGTYEGMFRHNINTITKALK.

Residues 1–18 form the signal peptide; that stretch reads MRQGLMAAVLFATFALTG. Residue Cys19 is the site of N-palmitoyl cysteine attachment. Cys19 carries the S-diacylglycerol cysteine lipid modification. Mn(2+) contacts are provided by His66, His132, His198, and Asp278.

It belongs to the bacterial solute-binding protein 9 family. In terms of assembly, the complex is probably composed of two ATP-binding proteins (MntB), two transmembrane proteins (MntC and MntD) and a solute-binding protein (MntA). Interacts with FloT.

It is found in the cell membrane. It localises to the membrane raft. Probably part of ATP-binding cassette (ABC) transport system MntABCD involved in manganese import. Binds manganese and delivers it to the membrane permease for translocation into the cytoplasm. In Bacillus subtilis (strain 168), this protein is Manganese-binding lipoprotein MntA.